Consider the following 299-residue polypeptide: Taste receptor type 2 member 5 (299 aa).

Position 1 (methionine 1) is a topological domain, extracellular. Residues 2-22 (LSAGLGLLMLVAVVEFLIGLI) form a helical membrane-spanning segment. At 23 to 45 (GNGVLVVWSFREWIRKFSWSSYN) the chain is on the cytoplasmic side. The helical transmembrane segment at 46–66 (LIILGLAGCRFVLQWLIILDL) threads the bilayer. The Extracellular portion of the chain corresponds to 67 to 82 (SLFPLFQSSRWLRYLS). A helical membrane pass occupies residues 83-103 (IFWVLVSQASLWFATFLSVFY). Residues 104-127 (CKKITTFDHPAYLWLKQRAYNLSL) lie on the Cytoplasmic side of the membrane. A helical transmembrane segment spans residues 128 to 148 (WCLLGYFIINLLLTVQIGLMF). Topologically, residues 149-175 (YHPPQGNSSIRYPFESWQYLYAFRLNS) are extracellular. N-linked (GlcNAc...) asparagine glycosylation is present at asparagine 155. Residues 176–196 (GSYLPLMVFLVSSGMLIVSLY) form a helical membrane-spanning segment. Residues 197–223 (THHKKMKVHSAGRRDVRAKAHITALKS) lie on the Cytoplasmic side of the membrane. A helical membrane pass occupies residues 224–244 (LGCFLLLHLVYIMASPFSIAS). Residues 245–253 (KTYPPDLTS) are Extracellular-facing. Residues 254–274 (VFIWETLMAAYPSLHSLILIM) form a helical membrane-spanning segment. Residues 275-299 (GIPRVKQTCQKILWKTVCARRCWGP) are Cytoplasmic-facing.

The protein belongs to the G-protein coupled receptor T2R family.

It localises to the membrane. Its function is as follows. Receptor that may play a role in the perception of bitterness and is gustducin-linked. May play a role in sensing the chemical composition of the gastrointestinal content. The activity of this receptor may stimulate alpha gustducin, mediate PLC-beta-2 activation and lead to the gating of TRPM5. This is Taste receptor type 2 member 5 (TAS2R5) from Pan paniscus (Pygmy chimpanzee).